The sequence spans 207 residues: Guanylate kinase (207 aa).

Residues 3 to 181 (GQLFVICGPS…AVEMVVSIVR (179 aa)) form the Guanylate kinase-like domain. 10–17 (GPSGAGKT) contributes to the ATP binding site.

This sequence belongs to the guanylate kinase family.

It is found in the cytoplasm. The catalysed reaction is GMP + ATP = GDP + ADP. Functionally, essential for recycling GMP and indirectly, cGMP. This is Guanylate kinase (gmk) from Thermotoga maritima (strain ATCC 43589 / DSM 3109 / JCM 10099 / NBRC 100826 / MSB8).